A 279-amino-acid chain; its full sequence is Proteasome subunit alpha type-1 (279 aa).

At Tyr103 the chain carries Phosphotyrosine. Basic and acidic residues predominate over residues 235 to 249 (HVAIAKENDNDTPRN). The tract at residues 235–279 (HVAIAKENDNDTPRNDDDDDRPSPPEEPAAGPRDPEVLVATEQRP) is disordered.

Belongs to the peptidase T1A family. The 26S proteasome consists of a 20S proteasome core and two 19S regulatory subunits. The 20S proteasome core is composed of 28 subunits that are arranged in four stacked rings, resulting in a barrel-shaped structure. The two end rings are each formed by seven alpha subunits, and the two central rings are each formed by seven beta subunits. The catalytic chamber with the active sites is on the inside of the barrel. Interacts with PI31.

It is found in the cytoplasm. The protein localises to the nucleus. Functionally, the proteasome is a multicatalytic proteinase complex which is characterized by its ability to cleave peptides with Arg, Phe, Tyr, Leu, and Glu adjacent to the leaving group at neutral or slightly basic pH. The proteasome has an ATP-dependent proteolytic activity. This Drosophila melanogaster (Fruit fly) protein is Proteasome subunit alpha type-1 (Prosalpha6).